Here is a 318-residue protein sequence, read N- to C-terminus: Glutathione synthetase (318 aa).

The region spanning 129–314 (KLAITEFPDL…VPEMFAVALE (186 aa)) is the ATP-grasp domain. Residue 155-211 (HAAQGDVIVKPLDDMGGTGIFRLQRSEPNLNAILETLTDNGTRTIMAQRYIPEIVKG) participates in ATP binding. Residues Glu-285 and Asn-287 each coordinate Mg(2+).

The protein belongs to the prokaryotic GSH synthase family. Requires Mg(2+) as cofactor. Mn(2+) is required as a cofactor.

It carries out the reaction gamma-L-glutamyl-L-cysteine + glycine + ATP = glutathione + ADP + phosphate + H(+). It functions in the pathway sulfur metabolism; glutathione biosynthesis; glutathione from L-cysteine and L-glutamate: step 2/2. This chain is Glutathione synthetase, found in Bordetella pertussis (strain Tohama I / ATCC BAA-589 / NCTC 13251).